Reading from the N-terminus, the 172-residue chain is MTNQPYYETMYILRPTIPEDEVDSHLKKYTEILESAGGEVLDSQMRGKRRLAYPIGKHKEGIYVQLSHQGDGQHIAVLEKAMRLTEDVIRYLTVKQDGPLPAKRVVKTSEKNVKEDKEVENKETTTEDKDQKGDLKETKKSENKDSVTEAEGQKDIKEAKEIENKEIEKKED.

The disordered stretch occupies residues 100–172; that stretch reads LPAKRVVKTS…ENKEIEKKED (73 aa). Basic and acidic residues predominate over residues 107 to 172; it reads KTSEKNVKED…ENKEIEKKED (66 aa).

It belongs to the bacterial ribosomal protein bS6 family.

Its function is as follows. Binds together with bS18 to 16S ribosomal RNA. The polypeptide is Small ribosomal subunit protein bS6 (Prochlorococcus marinus (strain MIT 9211)).